Consider the following 237-residue polypeptide: MKKEVIIALDFPTLEKTLEFLDKFKEEKLFVKVGMELYLQNGPIVIDEIKKRGHKIFLDLKLHDIPNTVYSAVKGLAKFNIDILTVHAAGGSEMLKGAKRAMTEAGVNTKVIAITQLTSTSEEDMRKEQNIQTSIEESVLNYARLAKESGVDGVVSSVLETKKIREQSGEEFIIINPGIRLAEDSKGDQKRVATPIDANRDGASYIVVGRSITGNENPEERYRLIKNMFEMGDKYVE.

Substrate-binding positions include Asp-10, Lys-32, 59–68, Thr-118, Arg-180, Gln-189, Gly-209, and Arg-210; that span reads DLKLHDIPNT. The active-site Proton donor is Lys-61.

The protein belongs to the OMP decarboxylase family. Type 1 subfamily. As to quaternary structure, homodimer.

It catalyses the reaction orotidine 5'-phosphate + H(+) = UMP + CO2. It participates in pyrimidine metabolism; UMP biosynthesis via de novo pathway; UMP from orotate: step 2/2. In terms of biological role, catalyzes the decarboxylation of orotidine 5'-monophosphate (OMP) to uridine 5'-monophosphate (UMP). The chain is Orotidine 5'-phosphate decarboxylase from Fusobacterium nucleatum subsp. nucleatum (strain ATCC 25586 / DSM 15643 / BCRC 10681 / CIP 101130 / JCM 8532 / KCTC 2640 / LMG 13131 / VPI 4355).